Reading from the N-terminus, the 237-residue chain is Probable transcriptional regulatory protein Mfl546 (237 aa).

The disordered stretch occupies residues 1-20 (MGRAHEVRAASMAKTAAKKS). The span at 9–20 (AASMAKTAAKKS) shows a compositional bias: low complexity.

Belongs to the TACO1 family.

Its subcellular location is the cytoplasm. This chain is Probable transcriptional regulatory protein Mfl546, found in Mesoplasma florum (strain ATCC 33453 / NBRC 100688 / NCTC 11704 / L1) (Acholeplasma florum).